A 122-amino-acid chain; its full sequence is Large ribosomal subunit protein uL14 (122 aa).

Belongs to the universal ribosomal protein uL14 family. In terms of assembly, part of the 50S ribosomal subunit. Forms a cluster with proteins L3 and L19. In the 70S ribosome, L14 and L19 interact and together make contacts with the 16S rRNA in bridges B5 and B8.

In terms of biological role, binds to 23S rRNA. Forms part of two intersubunit bridges in the 70S ribosome. This is Large ribosomal subunit protein uL14 from Idiomarina loihiensis (strain ATCC BAA-735 / DSM 15497 / L2-TR).